The chain runs to 145 residues: Deoxyuridine 5'-triphosphate nucleotidohydrolase (145 aa).

Substrate contacts are provided by residues 65–67 (RSG), asparagine 78, 82–84 (TID), and lysine 92.

Belongs to the dUTPase family. Mg(2+) is required as a cofactor.

It carries out the reaction dUTP + H2O = dUMP + diphosphate + H(+). It participates in pyrimidine metabolism; dUMP biosynthesis; dUMP from dCTP (dUTP route): step 2/2. In terms of biological role, this enzyme is involved in nucleotide metabolism: it produces dUMP, the immediate precursor of thymidine nucleotides and it decreases the intracellular concentration of dUTP so that uracil cannot be incorporated into DNA. The chain is Deoxyuridine 5'-triphosphate nucleotidohydrolase from Syntrophomonas wolfei subsp. wolfei (strain DSM 2245B / Goettingen).